The sequence spans 410 residues: Porin-like protein GalP (410 aa).

A signal peptide spans 1 to 25 (MKCRTLYPLVPTFALAASLPLQALA).

This sequence belongs to the outer membrane porin (Opr) (TC 1.B.25) family.

Its function is as follows. Probable transporter, possibly involved in the gallate degradation pathway. May play a role in the uptake of low gallate concentrations that may exist in the natural habitats of P.putida. The chain is Porin-like protein GalP (galP) from Pseudomonas putida (strain ATCC 47054 / DSM 6125 / CFBP 8728 / NCIMB 11950 / KT2440).